The following is a 996-amino-acid chain: Receptor-like protein kinase HSL1 (996 aa).

An N-terminal signal peptide occupies residues 1-15; the sequence is MYLLFLFLLFPTVFS. The Extracellular portion of the chain corresponds to 16–618; that stretch reads LNQDGFILQQ…ENEAKKRGYV (603 aa). LRR repeat units lie at residues 59–83, 84–107, 109–131, 133–154, 155–178, 179–203, 205–228, 229–252, 253–276, 278–299, 300–323, 325–347, 348–371, 373–395, 396–419, 421–443, 444–467, 468–491, 493–515, 516–539, 541–562, and 563–586; these read FSSV…ICRL, SNLA…IAAC, SLQT…LADI, TLVH…SFGK, FENL…FLGN, ISTL…EFGN, TNLE…LGQL, SKLV…LGGL, TNVV…LGNL, SLRL…ELCR, VPLE…IALS, NLYE…LGLN, SPLR…LCAK, ELEE…LADC, RSLT…FWGL, HVNL…IGGA, SNLS…IGSL, DNLN…LMSL, ELGT…IKSW, KKLN…IGSL, VLNY…SLQS, and LKLN…LAKD. N-linked (GlcNAc...) asparagine glycosylation is found at Asn-93 and Asn-97. Asn-143, Asn-178, Asn-186, and Asn-203 each carry an N-linked (GlcNAc...) asparagine glycan. N-linked (GlcNAc...) asparagine glycosylation is present at Asn-262. 2 N-linked (GlcNAc...) asparagine glycosylation sites follow: Asn-429 and Asn-445. Asn-569 carries N-linked (GlcNAc...) asparagine glycosylation. Residues 619 to 639 traverse the membrane as a helical segment; sequence WLLRSIFVLAAMVLLAGVAWF. Topologically, residues 640–996 are cytoplasmic; that stretch reads YFKYRTFKKA…EDTSDQGSIA (357 aa). The Protein kinase domain maps to 676–962; sequence LDEDNVIGAG…RRVVKMLQEI (287 aa). Residues 682 to 690 and Lys-704 contribute to the ATP site; that span reads IGAGASGKV. Phosphotyrosine is present on residues Tyr-764 and Tyr-802. The active-site Proton acceptor is the Asp-815. At Ser-851 the chain carries Phosphoserine. A phosphotyrosine mark is found at Tyr-859 and Tyr-866. Thr-867 carries the post-translational modification Phosphothreonine. Residues 967-996 form a disordered region; it reads EDSLHKIRDDKDGKLTPYYNEDTSDQGSIA. A compositionally biased stretch (basic and acidic residues) spans 968–980; it reads DSLHKIRDDKDGK.

Belongs to the protein kinase superfamily. Ser/Thr protein kinase family.

It localises to the cell membrane. The enzyme catalyses L-seryl-[protein] + ATP = O-phospho-L-seryl-[protein] + ADP + H(+). The catalysed reaction is L-threonyl-[protein] + ATP = O-phospho-L-threonyl-[protein] + ADP + H(+). This chain is Receptor-like protein kinase HSL1 (HSL1), found in Arabidopsis thaliana (Mouse-ear cress).